The primary structure comprises 182 residues: Thioredoxin F-type, chloroplastic (182 aa).

The interval 1 to 22 (MPLSLRLAPSPTALSPTTGGFS) is disordered. The Thioredoxin domain occupies 52–177 (KRGDSSVVRC…LVAAIETARS (126 aa)). Catalysis depends on nucleophile residues C102 and C105. C102 and C105 are disulfide-bonded.

It belongs to the thioredoxin family. Plant F-type subfamily. Forms a complex with heterodimeric ferredoxin-thioredoxin reductase (FTR) and ferredoxin.

It is found in the plastid. It localises to the chloroplast. Functionally, participates in various redox reactions through the reversible oxidation of the active center dithiol to a disulfide. The F form is known to activate a number of enzymes of the photosynthetic carbon cycle. In Brassica napus (Rape), this protein is Thioredoxin F-type, chloroplastic (TRXF).